Here is a 225-residue protein sequence, read N- to C-terminus: Cytidylate kinase (225 aa).

11 to 19 (GPAAAGKST) lines the ATP pocket.

This sequence belongs to the cytidylate kinase family. Type 1 subfamily.

The protein resides in the cytoplasm. It catalyses the reaction CMP + ATP = CDP + ADP. It carries out the reaction dCMP + ATP = dCDP + ADP. The polypeptide is Cytidylate kinase (Bacillus pumilus (strain SAFR-032)).